The primary structure comprises 46 residues: Aspartate aminotransferase 1 (46 aa).

This sequence belongs to the class-I pyridoxal-phosphate-dependent aminotransferase family. Homodimer. Pyridoxal 5'-phosphate serves as cofactor.

The enzyme catalyses L-aspartate + 2-oxoglutarate = oxaloacetate + L-glutamate. Its function is as follows. Important for the metabolism of amino acids and Krebs-cycle related organic acids. In plants, it is involved in nitrogen metabolism and in aspects of carbon and energy metabolism. The sequence is that of Aspartate aminotransferase 1 from Pseudotsuga menziesii (Douglas-fir).